Consider the following 449-residue polypeptide: CBL-interacting protein kinase 31 (449 aa).

Positions 20–275 (YELGRTIGEG…ISQILEDPWF (256 aa)) constitute a Protein kinase domain. Residues 26 to 34 (IGEGTFAKV) and Lys-49 each bind ATP. Asp-143 (proton acceptor) is an active-site residue. The tract at residues 161-190 (DFGLSALTEQVKADGLLHTTCGTPNYVAPE) is activation loop. In terms of domain architecture, NAF spans 313–337 (DQPTSMNAFELISLNQALNLDNLFE).

This sequence belongs to the protein kinase superfamily. CAMK Ser/Thr protein kinase family. SNF1 subfamily. As to quaternary structure, may interact with CBL3. Mn(2+) is required as a cofactor. Autophosphorylated. In terms of tissue distribution, highly expressed in leaf blade and leaf sheath, but not in other tissues.

The catalysed reaction is L-seryl-[protein] + ATP = O-phospho-L-seryl-[protein] + ADP + H(+). The enzyme catalyses L-threonyl-[protein] + ATP = O-phospho-L-threonyl-[protein] + ADP + H(+). Its function is as follows. Involved in cold stress tolerance. CIPK serine-threonine protein kinases interact with CBL proteins. Binding of a CBL protein to the regulatory NAF domain of CIPK protein lead to the activation of the kinase in a calcium-dependent manner. The chain is CBL-interacting protein kinase 31 (CIPK31) from Oryza sativa subsp. japonica (Rice).